The sequence spans 615 residues: Dihydroxy-acid dehydratase (615 aa).

Position 81 (Asp-81) interacts with Mg(2+). Cys-122 contacts [2Fe-2S] cluster. The Mg(2+) site is built by Asp-123 and Lys-124. The residue at position 124 (Lys-124) is an N6-carboxylysine. Cys-195 lines the [2Fe-2S] cluster pocket. Glu-491 is a Mg(2+) binding site. The Proton acceptor role is filled by Ser-517.

This sequence belongs to the IlvD/Edd family. Homodimer. The cofactor is [2Fe-2S] cluster. Mg(2+) is required as a cofactor.

The enzyme catalyses (2R)-2,3-dihydroxy-3-methylbutanoate = 3-methyl-2-oxobutanoate + H2O. The catalysed reaction is (2R,3R)-2,3-dihydroxy-3-methylpentanoate = (S)-3-methyl-2-oxopentanoate + H2O. It functions in the pathway amino-acid biosynthesis; L-isoleucine biosynthesis; L-isoleucine from 2-oxobutanoate: step 3/4. Its pathway is amino-acid biosynthesis; L-valine biosynthesis; L-valine from pyruvate: step 3/4. In terms of biological role, functions in the biosynthesis of branched-chain amino acids. Catalyzes the dehydration of (2R,3R)-2,3-dihydroxy-3-methylpentanoate (2,3-dihydroxy-3-methylvalerate) into 2-oxo-3-methylpentanoate (2-oxo-3-methylvalerate) and of (2R)-2,3-dihydroxy-3-methylbutanoate (2,3-dihydroxyisovalerate) into 2-oxo-3-methylbutanoate (2-oxoisovalerate), the penultimate precursor to L-isoleucine and L-valine, respectively. This chain is Dihydroxy-acid dehydratase, found in Shewanella piezotolerans (strain WP3 / JCM 13877).